A 342-amino-acid chain; its full sequence is Adenylate isopentenyltransferase 6, chloroplastic (342 aa).

A chloroplast-targeting transit peptide spans 1–33 (MQQLMTLLSPPLSHSSLLPTVTTKFGSPRLVTT). 52–59 (GTTGTGKS) provides a ligand contact to ATP.

Belongs to the IPP transferase family. Expressed in siliques, at the mRNA level.

The protein localises to the plastid. The protein resides in the chloroplast. The enzyme catalyses dimethylallyl diphosphate + ADP = N(6)-(dimethylallyl)adenosine 5'-diphosphate + diphosphate. It catalyses the reaction dimethylallyl diphosphate + ATP = N(6)-(dimethylallyl)adenosine 5'-triphosphate + diphosphate. Functionally, involved in cytokinin biosynthesis. Catalyzes the transfer of an isopentenyl group from dimethylallyl diphosphate (DMAPP) to ATP and ADP. The chain is Adenylate isopentenyltransferase 6, chloroplastic (IPT6) from Arabidopsis thaliana (Mouse-ear cress).